The primary structure comprises 76 residues: U10-ctenitoxin-Pn1a (76 aa).

A signal peptide spans serine 1–alanine 15. Positions glutamate 16–glycine 36 are excised as a propeptide. 4 cysteine pairs are disulfide-bonded: cysteine 39–cysteine 54, cysteine 46–cysteine 59, cysteine 53–cysteine 73, and cysteine 61–cysteine 71.

This sequence belongs to the neurotoxin 02 (plectoxin) family. 09 subfamily. As to expression, expressed by the venom gland.

It is found in the secreted. The chain is U10-ctenitoxin-Pn1a from Phoneutria nigriventer (Brazilian armed spider).